We begin with the raw amino-acid sequence, 265 residues long: Mlc titration factor A (265 aa).

His-111, His-148, His-152, and Glu-211 together coordinate Zn(2+).

This sequence belongs to the MtfA family. In terms of assembly, interacts with Mlc. Zn(2+) is required as a cofactor.

Its subcellular location is the cytoplasm. In terms of biological role, involved in the modulation of the activity of the glucose-phosphotransferase system (glucose-PTS). Interacts with the transcriptional repressor Mlc, preventing its interaction with DNA and leading to the modulation of expression of genes regulated by Mlc, including ptsG, which encodes the PTS system glucose-specific EIICB component. Its function is as follows. Shows zinc-dependent metallopeptidase activity. The sequence is that of Mlc titration factor A from Salmonella paratyphi A (strain AKU_12601).